A 78-amino-acid chain; its full sequence is Small ribosomal subunit protein uS17 (78 aa).

The protein belongs to the universal ribosomal protein uS17 family. In terms of assembly, part of the 30S ribosomal subunit.

In terms of biological role, one of the primary rRNA binding proteins, it binds specifically to the 5'-end of 16S ribosomal RNA. In Sinorhizobium fredii (strain NBRC 101917 / NGR234), this protein is Small ribosomal subunit protein uS17.